The sequence spans 467 residues: Argininosuccinate lyase (467 aa).

This sequence belongs to the lyase 1 family. Argininosuccinate lyase subfamily.

It is found in the cytoplasm. The enzyme catalyses 2-(N(omega)-L-arginino)succinate = fumarate + L-arginine. It functions in the pathway amino-acid biosynthesis; L-arginine biosynthesis; L-arginine from L-ornithine and carbamoyl phosphate: step 3/3. The chain is Argininosuccinate lyase from Sinorhizobium fredii (strain NBRC 101917 / NGR234).